We begin with the raw amino-acid sequence, 234 residues long: 2-hydroxy-3-keto-5-methylthiopentenyl-1-phosphate phosphatase (234 aa).

It belongs to the HAD-like hydrolase superfamily. MtnX family.

It carries out the reaction 2-hydroxy-5-methylsulfanyl-3-oxopent-1-enyl phosphate + H2O = 1,2-dihydroxy-5-(methylsulfanyl)pent-1-en-3-one + phosphate. It functions in the pathway amino-acid biosynthesis; L-methionine biosynthesis via salvage pathway; L-methionine from S-methyl-5-thio-alpha-D-ribose 1-phosphate: step 4/6. Its function is as follows. Dephosphorylates 2-hydroxy-3-keto-5-methylthiopentenyl-1-phosphate (HK-MTPenyl-1-P) yielding 1,2-dihydroxy-3-keto-5-methylthiopentene (DHK-MTPene). The chain is 2-hydroxy-3-keto-5-methylthiopentenyl-1-phosphate phosphatase from Bacillus velezensis (strain DSM 23117 / BGSC 10A6 / LMG 26770 / FZB42) (Bacillus amyloliquefaciens subsp. plantarum).